The chain runs to 689 residues: Glycine--tRNA ligase beta subunit (689 aa).

Belongs to the class-II aminoacyl-tRNA synthetase family. As to quaternary structure, tetramer of two alpha and two beta subunits.

The protein resides in the cytoplasm. It catalyses the reaction tRNA(Gly) + glycine + ATP = glycyl-tRNA(Gly) + AMP + diphosphate. The chain is Glycine--tRNA ligase beta subunit from Shewanella baltica (strain OS155 / ATCC BAA-1091).